The primary structure comprises 417 residues: UDP-N-acetylglucosamine 1-carboxyvinyltransferase (417 aa).

22–23 (KN) is a binding site for phosphoenolpyruvate. Arg92 lines the UDP-N-acetyl-alpha-D-glucosamine pocket. The active-site Proton donor is the Cys116. Cys116 bears the 2-(S-cysteinyl)pyruvic acid O-phosphothioketal mark. Residues Asp304 and Ile326 each coordinate UDP-N-acetyl-alpha-D-glucosamine.

The protein belongs to the EPSP synthase family. MurA subfamily.

The protein localises to the cytoplasm. It carries out the reaction phosphoenolpyruvate + UDP-N-acetyl-alpha-D-glucosamine = UDP-N-acetyl-3-O-(1-carboxyvinyl)-alpha-D-glucosamine + phosphate. Its pathway is cell wall biogenesis; peptidoglycan biosynthesis. Its function is as follows. Cell wall formation. Adds enolpyruvyl to UDP-N-acetylglucosamine. In Geotalea daltonii (strain DSM 22248 / JCM 15807 / FRC-32) (Geobacter daltonii), this protein is UDP-N-acetylglucosamine 1-carboxyvinyltransferase.